Reading from the N-terminus, the 315-residue chain is Nucleotide-binding protein PsycPRwf_2129 (315 aa).

Position 29 to 36 (29 to 36 (GRSGSGKT)) interacts with ATP. 79–82 (DIRT) lines the GTP pocket.

This sequence belongs to the RapZ-like family.

Displays ATPase and GTPase activities. This Psychrobacter sp. (strain PRwf-1) protein is Nucleotide-binding protein PsycPRwf_2129.